An 89-amino-acid chain; its full sequence is uncharacterized protein (89 aa).

This is an uncharacterized protein from Bacillus subtilis (strain 168).